Reading from the N-terminus, the 546-residue chain is DNA ligase (546 aa).

Glu244 provides a ligand contact to ATP. Lys246 functions as the N6-AMP-lysine intermediate in the catalytic mechanism. 6 residues coordinate ATP: Arg251, Arg266, Glu295, Phe334, Arg405, and Lys411.

Belongs to the ATP-dependent DNA ligase family. Mg(2+) serves as cofactor.

The catalysed reaction is ATP + (deoxyribonucleotide)n-3'-hydroxyl + 5'-phospho-(deoxyribonucleotide)m = (deoxyribonucleotide)n+m + AMP + diphosphate.. Its function is as follows. DNA ligase that seals nicks in double-stranded DNA during DNA replication, DNA recombination and DNA repair. This is DNA ligase from Methanocorpusculum labreanum (strain ATCC 43576 / DSM 4855 / Z).